A 47-amino-acid polypeptide reads, in one-letter code: Large ribosomal subunit protein bL34 (47 aa).

It belongs to the bacterial ribosomal protein bL34 family.

The sequence is that of Large ribosomal subunit protein bL34 from Mycobacteroides abscessus (strain ATCC 19977 / DSM 44196 / CCUG 20993 / CIP 104536 / JCM 13569 / NCTC 13031 / TMC 1543 / L948) (Mycobacterium abscessus).